We begin with the raw amino-acid sequence, 690 residues long: Eukaryotic translation initiation factor 3 subunit B (690 aa).

Residues 1–11 show a composition bias toward basic and acidic residues; sequence MAKKKSEEHSG. A disordered region spans residues 1 to 33; sequence MAKKKSEEHSGTDANDSDYQEEPNFDDPPGFVD. Residues 15–25 are compositionally biased toward acidic residues; that stretch reads NDSDYQEEPNF. One can recognise an RRM domain in the interval 57–141; the sequence is SVVVVDNIPK…HTFAVNLFTD (85 aa). 5 WD repeats span residues 207-246, 293-331, 334-369, 442-484, and 530-575; these read TRER…KIQK, DGMS…LLDL, IKIP…TLME, EIRE…KPSL, and PDHF…IKRT. The stretch at 595 to 645 forms a coiled coil; the sequence is EEKQKEIKKNLKKYYAAFEQKDRLRLTRASKELLEKRSQLRETFMEYRNKR.

This sequence belongs to the eIF-3 subunit B family. Component of the eukaryotic translation initiation factor 3 (eIF-3) complex. The eIF-3 complex interacts with pix. Interacts with mxt.

It localises to the cytoplasm. Its function is as follows. RNA-binding component of the eukaryotic translation initiation factor 3 (eIF-3) complex, which is involved in protein synthesis of a specialized repertoire of mRNAs and, together with other initiation factors, stimulates binding of mRNA and methionyl-tRNAi to the 40S ribosome. The eIF-3 complex specifically targets and initiates translation of a subset of mRNAs involved in cell proliferation. In Drosophila melanogaster (Fruit fly), this protein is Eukaryotic translation initiation factor 3 subunit B.